A 482-amino-acid chain; its full sequence is Bifunctional protein GlmU (482 aa).

The segment at 1–238 (MSAIRPAAVV…HREIAGINNR (238 aa)) is pyrophosphorylase. UDP-N-acetyl-alpha-D-glucosamine is bound by residues 12 to 15 (LAAG), Lys-26, Gln-79, and 84 to 85 (GT). Mg(2+) is bound at residue Asp-110. Positions 147, 163, 178, and 236 each coordinate UDP-N-acetyl-alpha-D-glucosamine. Asn-236 contacts Mg(2+). A linker region spans residues 239–259 (VQLAEARRILNDRLLTGAMLA). The N-acetyltransferase stretch occupies residues 260-482 (GVTVVDPATT…AVSREADGED (223 aa)). UDP-N-acetyl-alpha-D-glucosamine contacts are provided by Arg-341 and Lys-359. His-371 serves as the catalytic Proton acceptor. Tyr-374 and Asn-385 together coordinate UDP-N-acetyl-alpha-D-glucosamine. Acetyl-CoA is bound by residues Ala-388, 394-395 (NY), Ser-413, Ala-431, and Arg-448. The tract at residues 460–482 (RKRPGSAAAKAAEAVSREADGED) is disordered. A compositionally biased stretch (low complexity) spans 464-473 (GSAAAKAAEA).

In the N-terminal section; belongs to the N-acetylglucosamine-1-phosphate uridyltransferase family. The protein in the C-terminal section; belongs to the transferase hexapeptide repeat family. As to quaternary structure, homotrimer. It depends on Mg(2+) as a cofactor.

Its subcellular location is the cytoplasm. It catalyses the reaction alpha-D-glucosamine 1-phosphate + acetyl-CoA = N-acetyl-alpha-D-glucosamine 1-phosphate + CoA + H(+). It carries out the reaction N-acetyl-alpha-D-glucosamine 1-phosphate + UTP + H(+) = UDP-N-acetyl-alpha-D-glucosamine + diphosphate. It functions in the pathway nucleotide-sugar biosynthesis; UDP-N-acetyl-alpha-D-glucosamine biosynthesis; N-acetyl-alpha-D-glucosamine 1-phosphate from alpha-D-glucosamine 6-phosphate (route II): step 2/2. Its pathway is nucleotide-sugar biosynthesis; UDP-N-acetyl-alpha-D-glucosamine biosynthesis; UDP-N-acetyl-alpha-D-glucosamine from N-acetyl-alpha-D-glucosamine 1-phosphate: step 1/1. It participates in bacterial outer membrane biogenesis; LPS lipid A biosynthesis. Its function is as follows. Catalyzes the last two sequential reactions in the de novo biosynthetic pathway for UDP-N-acetylglucosamine (UDP-GlcNAc). The C-terminal domain catalyzes the transfer of acetyl group from acetyl coenzyme A to glucosamine-1-phosphate (GlcN-1-P) to produce N-acetylglucosamine-1-phosphate (GlcNAc-1-P), which is converted into UDP-GlcNAc by the transfer of uridine 5-monophosphate (from uridine 5-triphosphate), a reaction catalyzed by the N-terminal domain. The polypeptide is Bifunctional protein GlmU (Streptomyces coelicolor (strain ATCC BAA-471 / A3(2) / M145)).